The chain runs to 598 residues: Sulfoacetaldehyde acetyltransferase (598 aa).

It belongs to the TPP enzyme family. In terms of assembly, homotetramer. Mg(2+) serves as cofactor. The cofactor is thiamine diphosphate.

The protein localises to the cytoplasm. It catalyses the reaction acetyl phosphate + sulfite + H(+) = sulfoacetaldehyde + phosphate. It functions in the pathway organosulfur degradation; taurine degradation via aerobic pathway; acetyl phosphate and sulfite from taurine: step 2/2. This chain is Sulfoacetaldehyde acetyltransferase, found in Castellaniella defragrans (Alcaligenes defragrans).